Here is a 431-residue protein sequence, read N- to C-terminus: Tol-Pal system protein TolB (431 aa).

An N-terminal signal peptide occupies residues 1–26; that stretch reads MSLMTKLGFRALVASCLITAGSAANA. Residues 406–431 form a disordered region; it reads DGSAPPQILSVQGGSVREPSWGPFMQ.

This sequence belongs to the TolB family. In terms of assembly, the Tol-Pal system is composed of five core proteins: the inner membrane proteins TolA, TolQ and TolR, the periplasmic protein TolB and the outer membrane protein Pal. They form a network linking the inner and outer membranes and the peptidoglycan layer.

Its subcellular location is the periplasm. Functionally, part of the Tol-Pal system, which plays a role in outer membrane invagination during cell division and is important for maintaining outer membrane integrity. In Burkholderia cenocepacia (strain HI2424), this protein is Tol-Pal system protein TolB.